A 103-amino-acid polypeptide reads, in one-letter code: A-type ATP synthase subunit F (103 aa).

It belongs to the V-ATPase F subunit family. As to quaternary structure, has multiple subunits with at least A(3), B(3), C, D, E, F, H, I and proteolipid K(x).

The protein localises to the cell membrane. Its function is as follows. Component of the A-type ATP synthase that produces ATP from ADP in the presence of a proton gradient across the membrane. This chain is A-type ATP synthase subunit F, found in Pyrococcus abyssi (strain GE5 / Orsay).